The sequence spans 202 residues: MGLSNRAIIIDGKNHLLGRLASIVAKKLLQGDKVVVLRAEEIVISGNFHRSKLKYMSFLRKRCNINPARGAFHYRAPGKIFWRTVRGMLPHKTNRGNEALKNLRAYEGVPAKYQKTKSLHAPSASRFRLQPRRKFCVVGRLSHEVGWQFQDVVAKLEAKRKVKGAAYFEQKKKMDKLAVQAKKNAAPKIAQYQKIIEALGYN.

It belongs to the universal ribosomal protein uL13 family.

The protein is Large ribosomal subunit protein uL13 of Caenorhabditis elegans.